Consider the following 269-residue polypeptide: 4-hydroxy-tetrahydrodipicolinate reductase (269 aa).

NAD(+) contacts are provided by residues 10–15, Glu-36, 99–101, and 123–126; these read GANGRM, GTT, and AANF. His-156 serves as the catalytic Proton donor/acceptor. His-157 contributes to the (S)-2,3,4,5-tetrahydrodipicolinate binding site. Catalysis depends on Lys-160, which acts as the Proton donor. 166–167 provides a ligand contact to (S)-2,3,4,5-tetrahydrodipicolinate; sequence GT.

This sequence belongs to the DapB family.

The protein resides in the cytoplasm. The catalysed reaction is (S)-2,3,4,5-tetrahydrodipicolinate + NAD(+) + H2O = (2S,4S)-4-hydroxy-2,3,4,5-tetrahydrodipicolinate + NADH + H(+). It carries out the reaction (S)-2,3,4,5-tetrahydrodipicolinate + NADP(+) + H2O = (2S,4S)-4-hydroxy-2,3,4,5-tetrahydrodipicolinate + NADPH + H(+). It participates in amino-acid biosynthesis; L-lysine biosynthesis via DAP pathway; (S)-tetrahydrodipicolinate from L-aspartate: step 4/4. Functionally, catalyzes the conversion of 4-hydroxy-tetrahydrodipicolinate (HTPA) to tetrahydrodipicolinate. This is 4-hydroxy-tetrahydrodipicolinate reductase from Neisseria meningitidis serogroup C (strain 053442).